Reading from the N-terminus, the 365-residue chain is Putative agmatine deiminase (365 aa).

C356 acts as the Amidino-cysteine intermediate in catalysis.

Belongs to the agmatine deiminase family.

It catalyses the reaction agmatine + H2O = N-carbamoylputrescine + NH4(+). The protein is Putative agmatine deiminase of Latilactobacillus sakei subsp. sakei (strain 23K) (Lactobacillus sakei subsp. sakei).